Consider the following 392-residue polypeptide: Bone morphogenetic protein 15 (392 aa).

An N-terminal signal peptide occupies residues 1–18; the sequence is MVLLSILRILFLCELVLF. Residues 19 to 267 constitute a propeptide that is removed on maturation; it reads MEHRAQMAEG…ERESLLRRTR (249 aa). Asparagine 87, asparagine 147, and asparagine 237 each carry an N-linked (GlcNAc...) asparagine glycan. Glutamine 268 is subject to Pyrrolidone carboxylic acid; in P16 and P17. A Phosphoserine; in P16 modification is found at serine 273. Threonine 277 carries O-linked (HexNAc...) threonine; in P17 glycosylation. Cystine bridges form between cysteine 291-cysteine 357, cysteine 320-cysteine 389, and cysteine 324-cysteine 391. The N-linked (GlcNAc...) asparagine glycan is linked to asparagine 373.

It belongs to the TGF-beta family. As to quaternary structure, homodimer. But, in contrast to other members of this family, cannot be disulfide-linked.

The protein localises to the secreted. Its function is as follows. May be involved in follicular development. Oocyte-specific growth/differentiation factor that stimulates folliculogenesis and granulosa cell (GC) growth. This Homo sapiens (Human) protein is Bone morphogenetic protein 15 (BMP15).